The sequence spans 490 residues: 5'-3' exonuclease PLD3 (490 aa).

Over 1–38 the chain is Cytoplasmic; that stretch reads MKPKLMYQELKVPAEEPASELPMNEIEAWKAAEKKARW. The chain crosses the membrane as a helical; Signal-anchor for type II membrane protein span at residues 39–59; sequence VLLVLILAVVGFGALMTQLFL. The Lumenal segment spans residues 60–490; it reads WEYGDLHLFG…DSVGNACRLL (431 aa). Cystine bridges form between Cys77-Cys239 and Cys81-Cys237. Residues Asn97 and Asn132 are each glycosylated (N-linked (GlcNAc...) asparagine). The 28-residue stretch at 196–223 folds into the PLD phosphodiesterase 1 domain; that stretch reads THGVLHTKFWVVDQTHFYLGSANMDWRS. Catalysis depends on residues His201, Lys203, and Asp208. His201 acts as the Proton donor in catalysis. Residues His201 and Lys203 each coordinate phosphate. Asn218 is a phosphate binding site. N-linked (GlcNAc...) asparagine glycosylation is found at Asn236, Asn284, and Asn387. Cys366 and Cys487 are disulfide-bonded. Residues 411–437 enclose the PLD phosphodiesterase 2 domain; the sequence is YARVNHNKYMVTERATYIGTSNWSGSY. His416 contacts phosphate. The active-site Nucleophile is the His416. Phe438 lines the Mg(2+) pocket.

This sequence belongs to the phospholipase D family. As to quaternary structure, homodimer. Interacts with APP. N-glycosylated. In terms of processing, proteolytically processed to a soluble form that is stable within endosomes and lysosomes. During transport through the secretory pathway becomes proteolysed by cysteine proteases, thereby releasing a stable soluble lysosomal lumenal polypeptide, whereas the transmembrane-bound fragment is rapidly degraded. Its transport route to lysosomes involves ubiquitination and the ESCRT complex. Post-translationally, ubiquitinated. Ubiquitination mediates sorting into lysosomes.

Its subcellular location is the endoplasmic reticulum membrane. It is found in the lysosome lumen. The protein resides in the early endosome membrane. The protein localises to the late endosome membrane. It localises to the golgi apparatus membrane. Its subcellular location is the endosome membrane. The catalysed reaction is Exonucleolytic cleavage in the 5'- to 3'-direction to yield nucleoside 3'-phosphates.. It catalyses the reaction a 5'-end 5'-dephospho-ribonucleotidyl-ribonucleotide-RNA + H2O = a ribonucleoside 3'-phosphate + a 5'-end dephospho-ribonucleoside-RNA + H(+). It carries out the reaction a ribonucleoside 3'-phosphate-2'-3'-cyclophospho-GMP + H2O = a ribonucleoside 3'-phosphate + 2',3'-cyclophospho-GMP + H(+). The enzyme catalyses a 5'-end 5'-dephospho-2'-deoxyribonucleotidyl-2'-deoxyribonucleotide in single-stranded DNA + H2O = a 5'-end dephospho-2'-deoxyribonucleoside in single-stranded DNA + a 2'-deoxyribonucleoside 3'-phosphate + H(+). The catalysed reaction is a 5'-end 5'-phospho-2'-deoxyribonucleotide in single-stranded DNA + H2O = a 5'-end 5'-dephospho-2'-deoxyribonucleotide in single-stranded DNA + phosphate. It catalyses the reaction a 3-lyso-sn-glycero-1-phospho-(3'-acyl-1'-sn-glycerol) + a 1-acyl-sn-glycerol = a 3-acyl-sn-glycero-1-phospho-(3'-acyl-1'-sn-glycerol) + glycerol. It carries out the reaction 3-lyso-sn-glycero-1-phospho-(3'-(9Z-octadecenoyl)-1'-sn-glycerol) + 1-(9Z-octadecenoyl)-sn-glycerol = 3-(9Z-octadecenoyl)-sn-glycero-1-phospho-(3'-(9Z-octadecenoyl)-1'-sn-glycerol) + glycerol. Its function is as follows. 5'-&gt;3' exonuclease that hydrolyzes the phosphodiester bond of single-stranded DNA (ssDNA) and RNA molecules to form nucleoside 3'-monophosphates and 5'-end 5'-hydroxy deoxyribonucleotide/ribonucleotide fragments. Partially redundant with PLD4, can cleave all four nucleotides displaying higher efficiency for ssDNA and RNA fragments initiated with uridine and guanosine residues and lower efficiency for cytidine-initiated substrates. As a result, it does not always degrade polynucleotides to the single nucleotide level, it can stall at specific sites sparing certain fragments from exonucleolytic degradation. Processes self and pathogenic ssDNA and RNA molecules that reach the endolysosomal compartment via phagocytosis or autophagy and may serve as 'danger' signals for recognition by innate immune receptors such as toll-like receptors (TLRs). Degrades mitochondrial CpG-rich ssDNA fragments to prevent TLR9 activation and autoinflammatory response, but it can cleave viral RNA to generate ligands for TLR7 activation and initiate antiviral immune responses. In plasmacytoid dendritic cells, it cooperates with endonuclease RNASET2 to release 2',3'-cyclic guanosine monophosphate (2',3'-cGMP), a potent stimulatory ligand for TLR7. Produces 2',3'-cGMPs and cytidine-rich RNA fragments that occupy TLR7 ligand-binding pockets and trigger a signaling-competent state. Can exert polynucleotide phosphatase activity toward 5'-phosphorylated ssDNA substrates although at a slow rate. Transphosphatidylase that catalyzes the exchange with R to S stereo-inversion of the glycerol moiety between (S,R)-lysophosphatidylglycerol (LPG) and monoacylglycerol (MAG) substrates to yield (S,S)-bis(monoacylglycero)phosphate (BMP). Can synthesize a variety of (S,S)-BMPs representing the main phospholipid constituent of lysosomal intralumenal vesicle (ILV) membranes that bind acid hydrolases for lipid degradation. Regulates the homeostasis and interorganellar communication of the endolysosomal system with an overall impact on cellular removal of dysfunctional organelles via autophagy as well as proper protein and lipid turnover. May play a role in myotube formation in response to ER stress. The sequence is that of 5'-3' exonuclease PLD3 (PLD3) from Bos taurus (Bovine).